The sequence spans 136 residues: Cyclase aurE (136 aa).

The protein belongs to the aurE cyclase family.

Its pathway is polyketide biosynthesis. Its function is as follows. Cyclase; part of the gene cluster that mediates the biosynthesis of aurovertins, fungal polyketides that exhibit potent inhibition of adenosine triphosphate synthase. Tha biosynthesis starts with the HR-PKS aurA that selects propionate as the starter unit; synthesizes a hexa-ene chain through the repeated functions of the KR and DH domains in the first six iterations; selectively introduces three alpha-methyl substitutions at C4, C6, and C16 using the S-adensylmethionine-dependent cMET; and shuts off KR and DH in the last three iterations to afford a 1,3,5-triketo portion that can undergo intramolecular cyclization to yield the alpha-pyrone intermediate. AurE may act as a cyclase and enhances the rate of pyrone formation and product release of aurA. The methyltransferase aurB then methylates the C17 hydroxyl group. C17 methylation is required to initiate epoxidation by the downstream monooxygenase aurC. The monooxygenase aurC and the epoxide hydrolase aurD can iteratively transform the terminal triene portion of the methylated precursor into the dioxabicyclo[3.2.1]octane scaffold of aurovertin E. Epoxidation modifications of the precursor occur in two separate steps; bis-epoxidation of the two terminal olefins takes place first, followed by another epoxidation that occurs at C7-C8 after tetrahydrofuran formation. The O-acyltransferase aurG converts aurovertin E to aurovertin A. The protein is Cyclase aurE of Calcarisporium arbuscula (Dendryphion arbuscula).